The primary structure comprises 542 residues: Glucose-6-phosphate isomerase 2 (542 aa).

Catalysis depends on Glu-353, which acts as the Proton donor. Catalysis depends on residues His-384 and Lys-505.

It belongs to the GPI family.

The protein resides in the cytoplasm. It catalyses the reaction alpha-D-glucose 6-phosphate = beta-D-fructose 6-phosphate. It participates in carbohydrate biosynthesis; gluconeogenesis. Its pathway is carbohydrate degradation; glycolysis; D-glyceraldehyde 3-phosphate and glycerone phosphate from D-glucose: step 2/4. Catalyzes the reversible isomerization of glucose-6-phosphate to fructose-6-phosphate. This is Glucose-6-phosphate isomerase 2 from Cupriavidus pinatubonensis (strain JMP 134 / LMG 1197) (Cupriavidus necator (strain JMP 134)).